Here is a 253-residue protein sequence, read N- to C-terminus: Maleate isomerase (253 aa).

Residues asparagine 14, 80–82 (CLV), tyrosine 137, and asparagine 167 contribute to the substrate site. The active-site Nucleophile is cysteine 80. Cysteine 80 carries the S-(2-succinyl)cysteine modification. Cysteine 198 (proton donor) is an active-site residue. 199-200 (VQ) provides a ligand contact to substrate.

The protein belongs to the maleate isomerase family. As to quaternary structure, homodimer.

It carries out the reaction maleate = fumarate. Catalyzes cis-trans isomerization of the C2-C3 double bond in maleate to yield fumarate. This Alcaligenes faecalis protein is Maleate isomerase.